We begin with the raw amino-acid sequence, 586 residues long: Probable lysosomal cobalamin transporter (586 aa).

The next 9 helical transmembrane spans lie at isoleucine 10–phenylalanine 30, valine 47–valine 67, isoleucine 96–alanine 116, serine 147–glycine 167, alanine 191–threonine 211, leucine 315–threonine 335, isoleucine 378–valine 398, isoleucine 420–methionine 440, and valine 509–leucine 529. The N-linked (GlcNAc...) asparagine glycan is linked to asparagine 540.

The protein belongs to the LIMR family. LMBRD1 subfamily.

Its subcellular location is the lysosome membrane. Its function is as follows. Probable lysosomal cobalamin transporter. Required to export cobalamin from lysosomes allowing its conversion to cofactors. The protein is Probable lysosomal cobalamin transporter of Pyricularia oryzae (strain 70-15 / ATCC MYA-4617 / FGSC 8958) (Rice blast fungus).